The sequence spans 204 residues: Prephenate decarboxylase (204 aa).

The protein belongs to the prephenate decarboxylase family.

Its subcellular location is the cytoplasm. It catalyses the reaction prephenate + H(+) = 3-[(4R)-4-hydroxycyclohexa-1,5-dien-1-yl]-2-oxopropanoate + CO2. It functions in the pathway antibiotic biosynthesis; bacilysin biosynthesis. Part of the bacABCDEF operon responsible for the biosynthesis of the nonribosomally synthesized dipeptide antibiotic bacilysin, composed of L-alanine and L-anticapsin. Bacilysin is an irreversible inactivator of the glutaminase domain of glucosamine synthetase. BacA is an unusual prephenate decarboxylase that avoids the typical aromatization of the cyclohexadienol ring of prephenate. BacA catalyzes the protonation of prephenate (1-carboxy-4-hydroxy-alpha-oxo-2,5-cyclohexadiene-1-propanoic acid) at C6 position, followed by a decarboxylation to produce the endocyclic-delta(4),delta(8)-7R-dihydro-hydroxyphenylpyruvate (en-H2HPP). En-H2HPP is able to undergo a slow nonenzymatic isomerization to produce the exocyclic-delta(3),delta(5)-dihydro-hydroxyphenylpyruvate (ex-H2HPP). BacA isomerizes only the pro-R double bond in prephenate. The protein is Prephenate decarboxylase of Bacillus subtilis.